A 455-amino-acid chain; its full sequence is Ribosomal protein uS12 methylthiotransferase RimO (455 aa).

Positions 10 to 120 constitute an MTTase N-terminal domain; it reads PKVGMVSLGC…VVEAVHDAAP (111 aa). Positions 19, 55, 84, 151, 155, and 158 each coordinate [4Fe-4S] cluster. The region spanning 137–380 is the Radical SAM core domain; sequence LTPRHYSYLK…MAKTAAISAA (244 aa). Residues 383 to 455 enclose the TRAM domain; that stretch reads EAKIGRTLPV…DEHDLFGVVT (73 aa).

This sequence belongs to the methylthiotransferase family. RimO subfamily. It depends on [4Fe-4S] cluster as a cofactor.

Its subcellular location is the cytoplasm. It catalyses the reaction L-aspartate(89)-[ribosomal protein uS12]-hydrogen + (sulfur carrier)-SH + AH2 + 2 S-adenosyl-L-methionine = 3-methylsulfanyl-L-aspartate(89)-[ribosomal protein uS12]-hydrogen + (sulfur carrier)-H + 5'-deoxyadenosine + L-methionine + A + S-adenosyl-L-homocysteine + 2 H(+). Functionally, catalyzes the methylthiolation of an aspartic acid residue of ribosomal protein uS12. This Sphingopyxis alaskensis (strain DSM 13593 / LMG 18877 / RB2256) (Sphingomonas alaskensis) protein is Ribosomal protein uS12 methylthiotransferase RimO.